The following is a 440-amino-acid chain: Enolase (440 aa).

The interval 120–189 (KAAAAEKRVP…TEAMRQGAEV (70 aa)) is igE-binding determinant. Residues H159 and E168 each coordinate substrate. Catalysis depends on E211, which acts as the Proton donor. Residues D246, E297, and D324 each coordinate Mg(2+). Positions 297 and 324 each coordinate substrate. The active-site Proton acceptor is K349. Substrate-binding positions include 376 to 379 (SHRS) and K400.

Belongs to the enolase family. Homodimer. It depends on Mg(2+) as a cofactor.

The protein localises to the cytoplasm. It carries out the reaction (2R)-2-phosphoglycerate = phosphoenolpyruvate + H2O. Its pathway is carbohydrate degradation; glycolysis; pyruvate from D-glyceraldehyde 3-phosphate: step 4/5. This is Enolase (ENO) from Davidiella tassiana (Mycosphaerella tassiana).